The chain runs to 456 residues: Adenylosuccinate synthetase (456 aa).

Residues 11-17 and 39-41 contribute to the GTP site; these read GDEGKGG and GHT. Asp-12 functions as the Proton acceptor in the catalytic mechanism. Asp-12 and Gly-39 together coordinate Mg(2+). IMP contacts are provided by residues 12 to 15, 37 to 40, Thr-127, Arg-141, Gln-232, Thr-247, and Arg-328; these read DEGK and NAGH. Catalysis depends on His-40, which acts as the Proton donor. 324–330 is a substrate binding site; the sequence is TVTGRPR. Residues Arg-330, 356–358, and 441–443 each bind GTP; these read HLD and GVG.

This sequence belongs to the adenylosuccinate synthetase family. In terms of assembly, homodimer. Mg(2+) is required as a cofactor.

The protein resides in the cytoplasm. It catalyses the reaction IMP + L-aspartate + GTP = N(6)-(1,2-dicarboxyethyl)-AMP + GDP + phosphate + 2 H(+). It functions in the pathway purine metabolism; AMP biosynthesis via de novo pathway; AMP from IMP: step 1/2. In terms of biological role, plays an important role in the de novo pathway of purine nucleotide biosynthesis. Catalyzes the first committed step in the biosynthesis of AMP from IMP. The chain is Adenylosuccinate synthetase from Natronomonas pharaonis (strain ATCC 35678 / DSM 2160 / CIP 103997 / JCM 8858 / NBRC 14720 / NCIMB 2260 / Gabara) (Halobacterium pharaonis).